A 327-amino-acid polypeptide reads, in one-letter code: Fructose-1,6-bisphosphatase class 1 (327 aa).

4 residues coordinate Mg(2+): Glu84, Asp103, Leu105, and Asp106. Residues Asp106–Ser109, Asn197, and Lys263 contribute to the substrate site. Glu269 is a Mg(2+) binding site.

Belongs to the FBPase class 1 family. In terms of assembly, homotetramer. Mg(2+) is required as a cofactor.

It localises to the cytoplasm. It catalyses the reaction beta-D-fructose 1,6-bisphosphate + H2O = beta-D-fructose 6-phosphate + phosphate. Its pathway is carbohydrate biosynthesis; gluconeogenesis. In Idiomarina loihiensis (strain ATCC BAA-735 / DSM 15497 / L2-TR), this protein is Fructose-1,6-bisphosphatase class 1.